The chain runs to 247 residues: Type III pantothenate kinase (247 aa).

7-14 (AIGNSRWH) serves as a coordination point for ATP. Substrate contacts are provided by residues Y91 and 95 to 98 (GLDR). D97 functions as the Proton acceptor in the catalytic mechanism. A K(+)-binding site is contributed by D117. T120 lines the ATP pocket.

Belongs to the type III pantothenate kinase family. Homodimer. NH4(+) serves as cofactor. K(+) is required as a cofactor.

It is found in the cytoplasm. It catalyses the reaction (R)-pantothenate + ATP = (R)-4'-phosphopantothenate + ADP + H(+). The protein operates within cofactor biosynthesis; coenzyme A biosynthesis; CoA from (R)-pantothenate: step 1/5. In terms of biological role, catalyzes the phosphorylation of pantothenate (Pan), the first step in CoA biosynthesis. The protein is Type III pantothenate kinase of Synechococcus sp. (strain ATCC 27144 / PCC 6301 / SAUG 1402/1) (Anacystis nidulans).